The primary structure comprises 529 residues: Peptide chain release factor 3 (529 aa).

A tr-type G domain is found at 11-280; sequence SKRRTFAIIS…GLTEWAPAPK (270 aa). GTP is bound by residues 20-27, 88-92, and 142-145; these read SHPDAGKT, DTPGH, and NKLD.

Belongs to the TRAFAC class translation factor GTPase superfamily. Classic translation factor GTPase family. PrfC subfamily.

It is found in the cytoplasm. Its function is as follows. Increases the formation of ribosomal termination complexes and stimulates activities of RF-1 and RF-2. It binds guanine nucleotides and has strong preference for UGA stop codons. It may interact directly with the ribosome. The stimulation of RF-1 and RF-2 is significantly reduced by GTP and GDP, but not by GMP. In Vibrio campbellii (strain ATCC BAA-1116), this protein is Peptide chain release factor 3.